A 227-amino-acid polypeptide reads, in one-letter code: GFP-like non-fluorescent chromoprotein (227 aa).

Positions 63-65 form a cross-link, 2-iminomethyl-5-imidazolinone (Glu-Gly); it reads EYG. Y64 carries the 2,3-didehydrotyrosine modification.

This sequence belongs to the GFP family. As to quaternary structure, homotetramer. Contains a chromophore consisting of modified amino acid residues. The chromophore is formed by autocatalytic backbone condensation between Xaa-N and Gly-(N+2), oxidation of Tyr-(N+1) to didehydrotyrosine, and formation of a double bond to the alpha-amino nitrogen of residue Xaa-N. Maturation of the chromophore requires nothing other than molecular oxygen. The precise stereochemistry of the tyrosine has not been determined.

Its function is as follows. Non-fluorescent pigment protein that is lilac in color. The protein is GFP-like non-fluorescent chromoprotein of Radianthus crispa (Leathery sea anemone).